A 493-amino-acid chain; its full sequence is Solute carrier family 2, facilitated glucose transporter member 3 (493 aa).

At 1-10 the chain is on the cytoplasmic side; sequence MGTAKVTPSL. Residues 11–32 form a helical membrane-spanning segment; the sequence is VFAVTVATIGSFQFGYNTGVIN. Over 33–64 the chain is Extracellular; it reads APETIIKDFLNYTLEERLEDLPREGLLTTLWS. A glycan (N-linked (GlcNAc...) asparagine) is linked at Asn-43. The chain crosses the membrane as a helical span at residues 65–85; sequence LCVAIFSVGGMIGSFSVGLFV. The Cytoplasmic segment spans residues 86-90; the sequence is NRFGR. The chain crosses the membrane as a helical span at residues 91–111; sequence RNSMLLVNLIAILGGCLMGFA. The Extracellular portion of the chain corresponds to 112 to 118; that stretch reads KIAESVE. A helical membrane pass occupies residues 119–142; the sequence is MLILGRLIIGIFCGLCTGFVPMYI. At 143–153 the chain is on the cytoplasmic side; that stretch reads GEVSPTALRGA. A helical membrane pass occupies residues 154–174; it reads FGTLNQLGIVVGILVAQVFGL. D-glucose is bound at residue Gln-159. The Extracellular segment spans residues 175-183; the sequence is DFILGSEEL. A helical transmembrane segment spans residues 184-204; sequence WPGLLGLTIIPAILQSAALPF. The Cytoplasmic segment spans residues 205–269; the sequence is CPESPRFLLI…LFKSPSYFQP (65 aa). The residue at position 232 (Thr-232) is a Phosphothreonine. Residues 270 to 290 traverse the membrane as a helical segment; it reads LLISVVLQLSQQFSGINAVFY. The interval 277 to 279 is important for selectivity against fructose; that stretch reads QLS. Residues 280–281 and Asn-286 each bind D-glucose; that span reads QQ. At 291 to 304 the chain is on the extracellular side; the sequence is YSTGIFQDAGVQEP. Residues 305–325 form a helical membrane-spanning segment; the sequence is IYATIGAGVVNTIFTVVSLFL. Residue Asn-315 coordinates D-glucose. The Cytoplasmic segment spans residues 326–331; the sequence is VERAGR. Residues 332–352 traverse the membrane as a helical segment; it reads RTLHMIGLGGMAVCSVFMTIS. The Extracellular segment spans residues 353–363; that stretch reads LLLKDEYEAMS. The chain crosses the membrane as a helical span at residues 364-389; it reads FVCIVAILVYVAFFEIGPGPIPWFIV. D-glucose-binding residues include Glu-378 and Trp-386. Topologically, residues 390-399 are cytoplasmic; the sequence is AELFSQGPRP. A helical membrane pass occupies residues 400 to 420; sequence AAMAVAGCSNWTSNFLVGMFF. The Extracellular segment spans residues 421 to 429; sequence PSAAAYLGA. A helical transmembrane segment spans residues 430 to 450; it reads YVFIIFAAFLVFFLIFTSFKV. Residues 451–493 are Cytoplasmic-facing; the sequence is PETKGRTFEDITRAFEGQAHSGKGSAGVELNSMQPVKETPGNA. Residues Ser-471, Ser-475, and Ser-482 each carry the phosphoserine modification. Thr-489 carries the post-translational modification Phosphothreonine.

Belongs to the major facilitator superfamily. Sugar transporter (TC 2.A.1.1) family. Glucose transporter subfamily. As to quaternary structure, interacts with SMIM43; the interaction may promote SLC2A3-mediated glucose transport to meet the energy needs of mesendoderm differentiation. Brain and osteoblastic cells (at protein level). Highly expressed in brain.

The protein resides in the cell membrane. The protein localises to the perikaryon. It is found in the cell projection. The enzyme catalyses D-glucose(out) = D-glucose(in). It carries out the reaction D-galactose(in) = D-galactose(out). Deoxyglucose transport is inhibited by D-glucose, D-galactose and maltose. Galactose transport is inhibited by D-glucose and maltose. Functionally, facilitative glucose transporter. Can also mediate the uptake of various other monosaccharides across the cell membrane. Mediates the uptake of glucose, 2-deoxyglucose, galactose, mannose, xylose and fucose, and probably also dehydroascorbate. Does not mediate fructose transport. Required for mesendoderm differentiation. This chain is Solute carrier family 2, facilitated glucose transporter member 3, found in Rattus norvegicus (Rat).